Here is a 376-residue protein sequence, read N- to C-terminus: Acetylornithine aminotransferase (376 aa).

Residues 96–97 and Phe-128 contribute to the pyridoxal 5'-phosphate site; that span reads GT. Arg-131 serves as a coordination point for N(2)-acetyl-L-ornithine. 213–216 provides a ligand contact to pyridoxal 5'-phosphate; sequence DEVQ. Lys-242 carries the N6-(pyridoxal phosphate)lysine modification. Position 270 (Ser-270) interacts with N(2)-acetyl-L-ornithine. Residue Thr-271 coordinates pyridoxal 5'-phosphate.

This sequence belongs to the class-III pyridoxal-phosphate-dependent aminotransferase family. ArgD subfamily. In terms of assembly, homodimer. Pyridoxal 5'-phosphate is required as a cofactor.

The protein resides in the cytoplasm. The enzyme catalyses N(2)-acetyl-L-ornithine + 2-oxoglutarate = N-acetyl-L-glutamate 5-semialdehyde + L-glutamate. It functions in the pathway amino-acid biosynthesis; L-arginine biosynthesis; N(2)-acetyl-L-ornithine from L-glutamate: step 4/4. In Aquifex aeolicus (strain VF5), this protein is Acetylornithine aminotransferase.